Here is a 141-residue protein sequence, read N- to C-terminus: Large ribosomal subunit protein mL42 (141 aa).

A mitochondrion-targeting transit peptide spans 1–31; that stretch reads MTAAVKWAVSHRTIWRHLFPIQNGAISSACH.

Belongs to the mitochondrion-specific ribosomal protein mL42 family. As to quaternary structure, component of the mitochondrial ribosome large subunit (39S) which comprises a 16S rRNA and about 50 distinct proteins. Component of the mitochondrial ribosome small subunit (28S) which comprises a 12S rRNA and about 30 distinct proteins.

It localises to the mitochondrion. In Rattus norvegicus (Rat), this protein is Large ribosomal subunit protein mL42 (Mrpl42).